The chain runs to 203 residues: Small ribosomal subunit protein uS4 (203 aa).

The region spanning 92–152 (LRLATVLLRA…EKSRKLVPFI (61 aa)) is the S4 RNA-binding domain.

Belongs to the universal ribosomal protein uS4 family. As to quaternary structure, part of the 30S ribosomal subunit. Contacts protein S5. The interaction surface between S4 and S5 is involved in control of translational fidelity.

Its function is as follows. One of the primary rRNA binding proteins, it binds directly to 16S rRNA where it nucleates assembly of the body of the 30S subunit. In terms of biological role, with S5 and S12 plays an important role in translational accuracy. This is Small ribosomal subunit protein uS4 from Thermobifida fusca (strain YX).